We begin with the raw amino-acid sequence, 152 residues long: Superoxide dismutase [Cu-Zn] 4A (152 aa).

Cu cation is bound by residues H45, H47, and H62. Residues C56 and C145 are joined by a disulfide bond. Positions 62, 70, 79, and 82 each coordinate Zn(2+). H119 lines the Cu cation pocket.

Belongs to the Cu-Zn superoxide dismutase family. Homodimer. Cu cation is required as a cofactor. It depends on Zn(2+) as a cofactor.

It localises to the cytoplasm. It carries out the reaction 2 superoxide + 2 H(+) = H2O2 + O2. Destroys radicals which are normally produced within the cells and which are toxic to biological systems. This chain is Superoxide dismutase [Cu-Zn] 4A (SODCC.3), found in Zea mays (Maize).